Reading from the N-terminus, the 311-residue chain is Pyrimidine-specific ribonucleoside hydrolase RihA (311 aa).

H240 is a catalytic residue.

The protein belongs to the IUNH family. RihA subfamily.

Its function is as follows. Hydrolyzes cytidine or uridine to ribose and cytosine or uracil, respectively. The sequence is that of Pyrimidine-specific ribonucleoside hydrolase RihA from Salmonella enteritidis PT4 (strain P125109).